The following is an 83-amino-acid chain: Beta/kappa-theraphotoxin-Cg2a (83 aa).

Positions 1 to 21 (MKASVFAVILGLVVLCACSFA) are cleaved as a signal peptide. The propeptide occupies 22–53 (EDEQDQFVSPNELLKSMFVESRHEFTPEVEGR). Disulfide bonds link C55-C69, C62-C74, and C68-C78. An Isoleucine amide modification is found at I82.

This sequence belongs to the neurotoxin 30 (phrixotoxin) family. As to expression, expressed by the venom gland.

The protein resides in the secreted. This gating-modifier toxin shows an important inhibitory activity on sodium channels. It is very active on Nav1.7/SCN9A (IC(50)~0.6 nM), and also shows activity on Nav1.3/SCN3A (IC(50)=292 nM), Nav1.4/SCN4A (IC(50)=2.2-159 nM), and Nav1.5/SCN5A (IC(50)=2.3-2.9 uM). It has also been shown to inhibit tetrodotoxin (TTX)-resistant (IC(50)=27.6 nM) and TTX-sensitive (IC(50)=30.2 nM) sodium channels in rat dorsal root ganglion neurons. Lower inhibitory activity has also been shown on potassium channels: Kv4.2/KCND2 (IC(50)=604.2 nM), Kv4.3/KCND3 (IC(50)=425.1 nM), and Kv2.1/KCNB1 (IC(50)=14.3 uM). It binds to phospholipid membranes. Like its analog AM-8145, it may act by interacting only with the second voltage-sensor domain of Nav1.7/SCN9A. This Chilobrachys guangxiensis (Chinese earth tiger tarantula) protein is Beta/kappa-theraphotoxin-Cg2a.